The primary structure comprises 61 residues: Large ribosomal subunit protein bL32 (61 aa).

The segment covering 1–16 (MAVPKRKTSPSKRGMR) has biased composition (basic residues). The segment at 1 to 40 (MAVPKRKTSPSKRGMRRSADALKAPTYIEDKNSGELRRPH) is disordered. The segment covering 28–40 (IEDKNSGELRRPH) has biased composition (basic and acidic residues).

The protein belongs to the bacterial ribosomal protein bL32 family.

The sequence is that of Large ribosomal subunit protein bL32 from Sinorhizobium medicae (strain WSM419) (Ensifer medicae).